Consider the following 306-residue polypeptide: N-acetylmuramic acid 6-phosphate etherase (306 aa).

The SIS domain occupies 60–223; it reads TAAALRGGGR…STGAMVRLGK (164 aa). Residue glutamate 88 is the Proton donor of the active site. Residue glutamate 119 is part of the active site.

This sequence belongs to the GCKR-like family. MurNAc-6-P etherase subfamily. In terms of assembly, homodimer.

The catalysed reaction is N-acetyl-D-muramate 6-phosphate + H2O = N-acetyl-D-glucosamine 6-phosphate + (R)-lactate. The protein operates within amino-sugar metabolism; N-acetylmuramate degradation. Its function is as follows. Specifically catalyzes the cleavage of the D-lactyl ether substituent of MurNAc 6-phosphate, producing GlcNAc 6-phosphate and D-lactate. The sequence is that of N-acetylmuramic acid 6-phosphate etherase from Gloeobacter violaceus (strain ATCC 29082 / PCC 7421).